Reading from the N-terminus, the 619-residue chain is TOX high mobility group box family member 4 (619 aa).

2 disordered regions span residues 153-227 and 304-337; these read LGLS…QKPV and DMDPAPPSQTPSPPPVAAADPASPAPASTEPPAL. At T176 the chain carries Phosphothreonine. 3 positions are modified to phosphoserine: S178, S181, and S182. The segment covering 183–193 has biased composition (basic and acidic residues); sequence LHEDGVEEFRR. Positions 208-218 are enriched in basic residues; the sequence is KQKAPKKRKKK. A Nuclear localization signal motif is present at residues 213 to 218; it reads KKRKKK. Positions 223–291 form a DNA-binding region, HMG box; sequence PQKPVSAYAL…EYLKALAAYK (69 aa). A compositionally biased stretch (pro residues) spans 307–319; sequence PAPPSQTPSPPPV. T313 is modified (phosphothreonine). At S315 the chain carries Phosphoserine. Over residues 320-337 the composition is skewed to low complexity; sequence AAADPASPAPASTEPPAL. At R479 the chain carries Asymmetric dimethylarginine. A disordered region spans residues 507-529; it reads PPPVESSPEQPVNNSPETHTVEE. The segment covering 512–524 has biased composition (low complexity); that stretch reads SSPEQPVNNSPET. Residues S548, S550, S558, S560, and S565 each carry the phosphoserine modification.

In terms of assembly, component of the PNUTS-PP1 phosphatase complex, composed of PPP1R10/PNUTS, TOX4, WDR82 and PPP1CA or PPP1CB or PPP1CC. Interacts with PPP1R10/PNUTS. Interacts with FOXO1 and CREB1 (increased by cAMP); FOXO1 and CREB1 are required for full induction of TOX4-dependent activity and the interactions are inhibited by insulin.

It is found in the nucleus. It localises to the chromosome. Its activity is regulated as follows. In liver, recruited to target gene promoters following treatment with dexamethasone and cAMP. Binding is decreased in presence of insulin. Its function is as follows. Transcription factor that modulates cell fate reprogramming from the somatic state to the pluripotent and neuronal fate. In liver, controls the expression of hormone-regulated gluconeogenic genes such as G6PC1 and PCK1. This regulation is independent of the insulin receptor activation. Also acts as a regulatory component of protein phosphatase 1 (PP1) complexes. Component of the PNUTS-PP1 protein phosphatase complex, a PP1 complex that regulates RNA polymerase II transcription pause-release. PNUTS-PP1 also plays a role in the control of chromatin structure and cell cycle progression during the transition from mitosis into interphase. This Bos taurus (Bovine) protein is TOX high mobility group box family member 4 (TOX4).